Here is a 206-residue protein sequence, read N- to C-terminus: Ribosomal RNA large subunit methyltransferase E (206 aa).

S-adenosyl-L-methionine contacts are provided by glycine 60, tryptophan 62, aspartate 80, aspartate 96, and aspartate 121. The active-site Proton acceptor is the lysine 161.

This sequence belongs to the class I-like SAM-binding methyltransferase superfamily. RNA methyltransferase RlmE family.

The protein localises to the cytoplasm. The catalysed reaction is uridine(2552) in 23S rRNA + S-adenosyl-L-methionine = 2'-O-methyluridine(2552) in 23S rRNA + S-adenosyl-L-homocysteine + H(+). Its function is as follows. Specifically methylates the uridine in position 2552 of 23S rRNA at the 2'-O position of the ribose in the fully assembled 50S ribosomal subunit. The protein is Ribosomal RNA large subunit methyltransferase E of Nitrosospira multiformis (strain ATCC 25196 / NCIMB 11849 / C 71).